Here is a 502-residue protein sequence, read N- to C-terminus: Probable cytosol aminopeptidase (502 aa).

Mn(2+)-binding residues include Lys-270 and Asp-275. Lys-282 is an active-site residue. Positions 293, 352, and 354 each coordinate Mn(2+). Residue Arg-356 is part of the active site.

This sequence belongs to the peptidase M17 family. The cofactor is Mn(2+).

Its subcellular location is the cytoplasm. It catalyses the reaction Release of an N-terminal amino acid, Xaa-|-Yaa-, in which Xaa is preferably Leu, but may be other amino acids including Pro although not Arg or Lys, and Yaa may be Pro. Amino acid amides and methyl esters are also readily hydrolyzed, but rates on arylamides are exceedingly low.. The enzyme catalyses Release of an N-terminal amino acid, preferentially leucine, but not glutamic or aspartic acids.. In terms of biological role, presumably involved in the processing and regular turnover of intracellular proteins. Catalyzes the removal of unsubstituted N-terminal amino acids from various peptides. This is Probable cytosol aminopeptidase from Buchnera aphidicola subsp. Schizaphis graminum (strain Sg).